A 409-amino-acid chain; its full sequence is Argininosuccinate synthase (409 aa).

ATP is bound by residues 8–16 (AYSGGLDTS) and Ala34. Tyr85 contacts L-citrulline. Residue Gly115 participates in ATP binding. The L-aspartate site is built by Thr117, Asn121, and Asp122. Asn121 contributes to the L-citrulline binding site. L-citrulline-binding residues include Arg125, Ser178, Ser187, Glu268, and Tyr280.

The protein belongs to the argininosuccinate synthase family. Type 1 subfamily. As to quaternary structure, homotetramer.

Its subcellular location is the cytoplasm. It catalyses the reaction L-citrulline + L-aspartate + ATP = 2-(N(omega)-L-arginino)succinate + AMP + diphosphate + H(+). It participates in amino-acid biosynthesis; L-arginine biosynthesis; L-arginine from L-ornithine and carbamoyl phosphate: step 2/3. The sequence is that of Argininosuccinate synthase from Thermotoga maritima (strain ATCC 43589 / DSM 3109 / JCM 10099 / NBRC 100826 / MSB8).